The chain runs to 230 residues: Claudin-2 (230 aa).

The Cytoplasmic portion of the chain corresponds to 1–7 (MASLGLQ). A helical transmembrane segment spans residues 8 to 28 (LVGYILGLLGLLGTLVAMLLP). Residues 29–81 (SWKTSSYVGASIVTAVGFSKGLWMECATHSTGITQCDIYSTLLGLPADIQAAQ) lie on the Extracellular side of the membrane. A disulfide bridge connects residues C54 and C64. A helical membrane pass occupies residues 82–102 (AMMVTSSAISSLACIISVVGM). Residues 103-116 (RCTVFCQESRAKDR) lie on the Cytoplasmic side of the membrane. A helical membrane pass occupies residues 117–137 (VAVAGGVFFILGGLLGFIPVA). The Extracellular portion of the chain corresponds to 138–162 (WNLHGILRDFYSPLVPDSMKFEIGE). The helical transmembrane segment at 163-183 (ALYLGIISSLFSLIAGIILCF) threads the bilayer. The Cytoplasmic segment spans residues 184 to 230 (SCSSQRNRSNYYDAYQAQPLATRSSPRPGQPPKVKSEFNSYSLTGYV). A disordered region spans residues 205-230 (TRSSPRPGQPPKVKSEFNSYSLTGYV). Residue K218 forms a Glycyl lysine isopeptide (Lys-Gly) (interchain with G-Cter in SUMO) linkage. S219 and S223 each carry phosphoserine. Over residues 220-230 (EFNSYSLTGYV) the composition is skewed to polar residues. The segment at 229–230 (YV) is interactions with TJP1, TJP2 and TJP3.

The protein belongs to the claudin family. As to quaternary structure, can form homo- and heteropolymers with other claudins to mediate paracellular barrier and channel functions of tight junctions in response to physiological stimuli. Homopolymers interact with CLDN3, but not CLDN1, homopolymers. Directly interacts with TJP1/ZO-1, TJP2/ZO-2 and TJP3/ZO-3. Post-translationally, the disulfide bond is necessary for pore formation, but is not required for correct protein trafficking.

Its subcellular location is the cell junction. It is found in the tight junction. The protein localises to the cell membrane. It carries out the reaction Na(+)(in) = Na(+)(out). It catalyses the reaction K(+)(in) = K(+)(out). The enzyme catalyses Rb(+)(in) = Rb(+)(out). The catalysed reaction is Li(+)(in) = Li(+)(out). It carries out the reaction Cs(+)(in) = Cs(+)(out). It catalyses the reaction Ca(2+)(in) = Ca(2+)(out). The enzyme catalyses methylamine(out) = methylamine(in). The catalysed reaction is choline(out) = choline(in). It carries out the reaction H2O(in) = H2O(out). Functionally, forms paracellular channels: polymerizes in tight junction strands with cation- and water-selective channels through the strands, conveying epithelial permeability in a process known as paracellular tight junction permeability. In intestinal epithelium, allows for sodium and water fluxes from the peritoneal side to the lumen of the intestine to regulate nutrient absorption and clear enteric pathogens as part of mucosal immune response. In kidney, allows passive sodium and calcium reabsorption across proximal tubules from the lumen back to the bloodstream. In the hepatobiliary tract, allows paracellular water and cation fluxes in the hepatic perivenous areas and biliary epithelium to generate bile flow and maintain osmotic gradients. In Homo sapiens (Human), this protein is Claudin-2.